The sequence spans 587 residues: Arginine--tRNA ligase (587 aa).

The 'HIGH' region motif lies at 127–137; sequence PNLAKEMHVGH.

Belongs to the class-I aminoacyl-tRNA synthetase family. Monomer.

It localises to the cytoplasm. The catalysed reaction is tRNA(Arg) + L-arginine + ATP = L-arginyl-tRNA(Arg) + AMP + diphosphate. The polypeptide is Arginine--tRNA ligase (Pseudomonas aeruginosa (strain ATCC 15692 / DSM 22644 / CIP 104116 / JCM 14847 / LMG 12228 / 1C / PRS 101 / PAO1)).